The sequence spans 285 residues: HTH-type transcriptional regulator MurR (285 aa).

Residues M1–S77 enclose the HTH rpiR-type domain. The H-T-H motif DNA-binding region spans S37–Q56. In terms of domain architecture, SIS spans I128–V268.

In terms of assembly, homotetramer.

The protein operates within amino-sugar metabolism; N-acetylmuramate degradation [regulation]. In terms of biological role, represses the expression of the murPQ operon involved in the uptake and degradation of N-acetylmuramic acid (MurNAc). Binds to two adjacent inverted repeats within the operator region. MurNAc 6-phosphate, the substrate of MurQ, is the specific inducer that weakens binding of MurR to the operator. In Escherichia coli O157:H7, this protein is HTH-type transcriptional regulator MurR.